A 245-amino-acid chain; its full sequence is Ribosomal RNA small subunit methyltransferase G (245 aa).

S-adenosyl-L-methionine-binding positions include glycine 80, phenylalanine 85, 103–105 (DAT), 131–132 (AE), and arginine 150.

Belongs to the methyltransferase superfamily. RNA methyltransferase RsmG family.

It is found in the cytoplasm. Specifically methylates the N7 position of a guanine in 16S rRNA. This is Ribosomal RNA small subunit methyltransferase G from Deinococcus geothermalis (strain DSM 11300 / CIP 105573 / AG-3a).